Here is an 872-residue protein sequence, read N- to C-terminus: Alanine--tRNA ligase (872 aa).

Residues His-567, His-571, Cys-669, and His-673 each coordinate Zn(2+).

Belongs to the class-II aminoacyl-tRNA synthetase family. It depends on Zn(2+) as a cofactor.

It localises to the cytoplasm. The catalysed reaction is tRNA(Ala) + L-alanine + ATP = L-alanyl-tRNA(Ala) + AMP + diphosphate. Functionally, catalyzes the attachment of alanine to tRNA(Ala) in a two-step reaction: alanine is first activated by ATP to form Ala-AMP and then transferred to the acceptor end of tRNA(Ala). Also edits incorrectly charged Ser-tRNA(Ala) and Gly-tRNA(Ala) via its editing domain. This is Alanine--tRNA ligase from Streptococcus thermophilus (strain ATCC BAA-491 / LMD-9).